The following is a 424-amino-acid chain: MLDIKRIRTDFEAVAEKLATRGVDAAVLNEMKEIDAKRRNILVKVETLKAERNTVSAEIAQAKRNKENTDDKIAAMQNLSAEVKALDAELAEIDAKLTEFTTTLPNIPADSVPVGADEDDNVEVRRWGTPREFDFEPKAHWDLGEDLGILDWERGGKVTGARFLFYKGLGARLERAIYNFMLDEHGKEGYTEVITPYIVNHDSMFGTGQYPKFKEDTFELSDTNFVLIPTAEVPLTNYYRDEILDGKDLPIYFTAMSPSFRSEAGSAGRDTRGLIRLHQFHKVEMVKFAKPEESYEELEKMTANAENILQKLNLPYRVVALSTGDMGFSATKTYDLEVWIPAQNNYREISSCSNTEDFQARRAQIRYRDEADGKVKLLHTLNGSGLAVGRTVAAILENYQNEDGSVTIPEALRPYMGGAEVIKP.

230–232 (TAE) contributes to the L-serine binding site. Residue 261-263 (RSE) participates in ATP binding. Position 284 (Glu-284) interacts with L-serine. 348–351 (EISS) provides a ligand contact to ATP. Ser-384 contacts L-serine.

This sequence belongs to the class-II aminoacyl-tRNA synthetase family. Type-1 seryl-tRNA synthetase subfamily. As to quaternary structure, homodimer. The tRNA molecule binds across the dimer.

It localises to the cytoplasm. It carries out the reaction tRNA(Ser) + L-serine + ATP = L-seryl-tRNA(Ser) + AMP + diphosphate + H(+). It catalyses the reaction tRNA(Sec) + L-serine + ATP = L-seryl-tRNA(Sec) + AMP + diphosphate + H(+). It participates in aminoacyl-tRNA biosynthesis; selenocysteinyl-tRNA(Sec) biosynthesis; L-seryl-tRNA(Sec) from L-serine and tRNA(Sec): step 1/1. In terms of biological role, catalyzes the attachment of serine to tRNA(Ser). Is also able to aminoacylate tRNA(Sec) with serine, to form the misacylated tRNA L-seryl-tRNA(Sec), which will be further converted into selenocysteinyl-tRNA(Sec). This chain is Serine--tRNA ligase, found in Streptococcus pneumoniae serotype 2 (strain D39 / NCTC 7466).